A 259-amino-acid polypeptide reads, in one-letter code: Ribosomal RNA small subunit methyltransferase J (259 aa).

S-adenosyl-L-methionine-binding positions include Arg101–Asp102, Glu117–Arg118, Ser153–Ser154, and Asp176.

Belongs to the methyltransferase superfamily. RsmJ family.

The protein resides in the cytoplasm. The enzyme catalyses guanosine(1516) in 16S rRNA + S-adenosyl-L-methionine = N(2)-methylguanosine(1516) in 16S rRNA + S-adenosyl-L-homocysteine + H(+). Its function is as follows. Specifically methylates the guanosine in position 1516 of 16S rRNA. In Vibrio vulnificus (strain YJ016), this protein is Ribosomal RNA small subunit methyltransferase J.